Here is a 241-residue protein sequence, read N- to C-terminus: DNA repair protein RecO (241 aa).

This sequence belongs to the RecO family.

Its function is as follows. Involved in DNA repair and RecF pathway recombination. This Roseobacter denitrificans (strain ATCC 33942 / OCh 114) (Erythrobacter sp. (strain OCh 114)) protein is DNA repair protein RecO.